We begin with the raw amino-acid sequence, 261 residues long: Cytochrome c oxidase subunit 3 (261 aa).

The Mitochondrial matrix segment spans residues 1–15 (MAHQAHAYHMVDPSP). Residues 16–34 (WPLTGAVAALLLTSGLAVW) form a helical membrane-spanning segment. At 35–40 (FHFKSL) the chain is on the mitochondrial intermembrane side. Residues 41–66 (TLLAMGLLLMILTMIQWWRDIIREGT) traverse the membrane as a helical segment. Residues 67-72 (FQGHHT) are Mitochondrial matrix-facing. Residues 73–105 (PPVQKGLRYGMILFITSEVFFFLGFFWAFYHSS) form a helical membrane-spanning segment. At 106–128 (LAPTPELGGIWPPTGITPLDPFE) the chain is on the mitochondrial intermembrane side. Residues 129 to 152 (VPLLNTAVLLASGVTVTWTHHSLM) form a helical membrane-spanning segment. Residues 153-155 (EGK) are Mitochondrial matrix-facing. A helical transmembrane segment spans residues 156 to 183 (RTEATQALTLTILLGLYFTALQAMEYYE). At 184–190 (APFTIAD) the chain is on the mitochondrial intermembrane side. A helical membrane pass occupies residues 191-223 (GVYGTTFFVATGFHGLHVIIGSTFLAGCLLRQI). The Mitochondrial matrix segment spans residues 224-232 (LYHFTSSHH). A helical transmembrane segment spans residues 233–256 (FGFEAAAWYWHFVDVVWLFLYVSI). Residues 257-261 (YWWGS) are Mitochondrial intermembrane-facing.

It belongs to the cytochrome c oxidase subunit 3 family. As to quaternary structure, component of the cytochrome c oxidase (complex IV, CIV), a multisubunit enzyme composed of 14 subunits. The complex is composed of a catalytic core of 3 subunits MT-CO1, MT-CO2 and MT-CO3, encoded in the mitochondrial DNA, and 11 supernumerary subunits COX4I, COX5A, COX5B, COX6A, COX6B, COX6C, COX7A, COX7B, COX7C, COX8 and NDUFA4, which are encoded in the nuclear genome. The complex exists as a monomer or a dimer and forms supercomplexes (SCs) in the inner mitochondrial membrane with NADH-ubiquinone oxidoreductase (complex I, CI) and ubiquinol-cytochrome c oxidoreductase (cytochrome b-c1 complex, complex III, CIII), resulting in different assemblies (supercomplex SCI(1)III(2)IV(1) and megacomplex MCI(2)III(2)IV(2)).

Its subcellular location is the mitochondrion inner membrane. It catalyses the reaction 4 Fe(II)-[cytochrome c] + O2 + 8 H(+)(in) = 4 Fe(III)-[cytochrome c] + 2 H2O + 4 H(+)(out). Functionally, component of the cytochrome c oxidase, the last enzyme in the mitochondrial electron transport chain which drives oxidative phosphorylation. The respiratory chain contains 3 multisubunit complexes succinate dehydrogenase (complex II, CII), ubiquinol-cytochrome c oxidoreductase (cytochrome b-c1 complex, complex III, CIII) and cytochrome c oxidase (complex IV, CIV), that cooperate to transfer electrons derived from NADH and succinate to molecular oxygen, creating an electrochemical gradient over the inner membrane that drives transmembrane transport and the ATP synthase. Cytochrome c oxidase is the component of the respiratory chain that catalyzes the reduction of oxygen to water. Electrons originating from reduced cytochrome c in the intermembrane space (IMS) are transferred via the dinuclear copper A center (CU(A)) of subunit 2 and heme A of subunit 1 to the active site in subunit 1, a binuclear center (BNC) formed by heme A3 and copper B (CU(B)). The BNC reduces molecular oxygen to 2 water molecules using 4 electrons from cytochrome c in the IMS and 4 protons from the mitochondrial matrix. This is Cytochrome c oxidase subunit 3 (mt-co3) from Polypterus ornatipinnis (Ornate bichir).